The chain runs to 270 residues: Protein US2 homolog (270 aa).

It belongs to the herpesviridae US2 family.

This chain is Protein US2 homolog (MDV091), found in Gallid herpesvirus 2 (strain Chicken/Md5/ATCC VR-987) (GaHV-2).